We begin with the raw amino-acid sequence, 37 residues long: Large ribosomal subunit protein bL36c (37 aa).

It belongs to the bacterial ribosomal protein bL36 family.

It localises to the plastid. The protein localises to the chloroplast. In Welwitschia mirabilis (Tree tumbo), this protein is Large ribosomal subunit protein bL36c.